The primary structure comprises 20 residues: Pommaclein (20 aa).

It belongs to the GASA family. As to expression, expressed in pulp (aril) of fruits (at protein level).

The polypeptide is Pommaclein (Punica granatum (Pomegranate)).